The chain runs to 267 residues: MVSPAAPDLTDDLTDAELAADLAADAGKLLLQVRAEIGFDQPWTLGEAGDRQANSLLLRRLQAERPGDAVLSEEAHDDLARLKSDRVWIIDPLDGTREFSTPGRDDWAVHIALWRRSSNGQPEITDAAVALPARGNVVYRTDTVTSGAAPAGVPGTLRIAVSATRPPAVLHRIRQTLAIQPVSIGSAGAKAMAVIDGYVDAYLHAGGQWEWDSAAPAGVMLAAGMHASRLDGSPLRYNQLDPYLPDLLMCRAEVAPILLGAIADAWR.

Glu-73, Asp-91, Leu-93, Asp-94, and Asp-212 together coordinate Mg(2+). Glu-73 serves as a coordination point for substrate. Residues 93–96 and Asp-212 each bind substrate; that span reads LDGT.

The protein belongs to the inositol monophosphatase superfamily. Homodimer. Mg(2+) is required as a cofactor.

It catalyses the reaction adenosine 3',5'-bisphosphate + H2O = AMP + phosphate. The enzyme catalyses beta-D-fructose 1,6-bisphosphate + H2O = beta-D-fructose 6-phosphate + phosphate. The catalysed reaction is a myo-inositol phosphate + H2O = myo-inositol + phosphate. The protein operates within sulfur metabolism; sulfate assimilation. Phosphatase with a broad specificity. Its primary physiological function is to dephosphorylate 3'-phosphoadenosine 5'-phosphate (PAP) and 3'-phosphoadenosine 5'-phosphosulfate (PAPS). Thus, plays a role in mycobacterial sulfur metabolism, since it can serve as a key regulator of the sulfate assimilation pathway by controlling the pools of PAP and PAPS in the cell. To a lesser extent, is also able to hydrolyze inositol 1-phosphate (I-1-P), fructose 1,6-bisphosphate (FBP) (to fructose 6-phosphate (F-6-P)) and AMP in vitro, but this might not be significant in vivo. This is 3'-phosphoadenosine 5'-phosphate phosphatase (cysQ) from Mycobacterium bovis (strain ATCC BAA-935 / AF2122/97).